A 721-amino-acid chain; its full sequence is Ophiobolin F synthase oblA (721 aa).

A (7Z)-ophiobola-7,19-dien-3-ol synthase region spans residues 5–325 (YDQPYSVLLD…RYNLKAEWNE (321 aa)). 2 residues coordinate Mg(2+): aspartate 97 and aspartate 101. Substrate is bound at residue aspartate 97. A DDXXD 1 motif is present at residues 97 to 101 (DDVID). Substrate-binding positions include 185-188 (RSLD), asparagine 229, 233-237 (SFEKE), and 316-317 (RY). Positions 229–237 (NDLFSFEKE) match the NSE/DTE motif. Residues 326-721 (LQMLRAKHGV…LRLMMEMLKV (396 aa)) are geranylfarnesyl diphosphate synthase. The tract at residues 348–387 (SMDHIWKKGSTQGESKGEKRKRQSVNGTNGVNGTNGVKKP) is disordered. Residues 372-384 (VNGTNGVNGTNGV) show a composition bias toward low complexity. Residues lysine 432, arginine 435, and histidine 464 each contribute to the isopentenyl diphosphate site. Mg(2+)-binding residues include aspartate 471 and aspartate 475. Positions 471–475 (DDLED) match the DDXXD 2 motif. Arginine 480 lines the dimethylallyl diphosphate pocket. Residue arginine 481 coordinates isopentenyl diphosphate. Dimethylallyl diphosphate contacts are provided by lysine 558, threonine 559, glutamine 597, asparagine 604, lysine 614, and lysine 624.

It in the N-terminal section; belongs to the terpene synthase family. In the C-terminal section; belongs to the FPP/GGPP synthase family. Requires Mg(2+) as cofactor.

It catalyses the reaction isopentenyl diphosphate + (2E,6E)-farnesyl diphosphate = (2E,6E,10E)-geranylgeranyl diphosphate + diphosphate. The enzyme catalyses isopentenyl diphosphate + (2E,6E,10E)-geranylgeranyl diphosphate = (2E,6E,10E,14E)-geranylfarnesyl diphosphate + diphosphate. It carries out the reaction (2E,6E,10E,14E)-geranylfarnesyl diphosphate + H2O = ophiobolin F + diphosphate. The protein operates within secondary metabolite biosynthesis; terpenoid biosynthesis. Functionally, bifunctional sesterterpene synthase; part of the gene cluster that mediates the biosynthesis of the sesterterpenes ophiobolins, fungal phytotoxins with potential anti-cancer activities. The first step of the pathway is performed by the sesterterpene synthase oblA that possesses both prenyl transferase and terpene cyclase activity, converting isopentenyl diphosphate and dimethylallyl diphosphate into geranylfarnesyl diphosphate (GFPP) and further converting GFPP into ophiobolin F, respectively. Other sesterterpenoids (C(25) terpenoids) are found as minor products of oblA. The cytochrome P450 monooxygenase oblB then catalyzes a four-step oxidative transformation of ophiobolin F to yield ophiobolin C. The FAD-dependent oxidoreductase oblC might be involved in a later oxidation step that produces ophiobolin A. The polypeptide is Ophiobolin F synthase oblA (Cochliobolus heterostrophus (strain C5 / ATCC 48332 / race O) (Southern corn leaf blight fungus)).